Reading from the N-terminus, the 258-residue chain is MASFGWKRKIGEKVSKEVSQHFEEEAADESVVLDSHDVDWLHAIKRKKDVLLEDNVAKSKRLKEEGGLLAEDGRQKEALTKWDEAIQLTPGDAALYEMKAQVLMGVHEIFPAVQAAETAVQRNPHFVEAWQTLGRAQLSLGEITMAIRSFQIGLHICPANTELWEQDLNWARQLLLQKMDTESAERKRRDVNITREQIPDYDFESDEVVAACDAISQKQKMAAANKTVVVSASGSENLSDRKEDKVETNDSKEFIKAR.

TPR repeat units lie at residues 59-92 (SKRL…TPGD), 93-126 (AALY…NPHF), and 127-160 (VEAW…CPAN). The disordered stretch occupies residues 231–258 (SASGSENLSDRKEDKVETNDSKEFIKAR). A compositionally biased stretch (basic and acidic residues) spans 238 to 258 (LSDRKEDKVETNDSKEFIKAR).

In Xenopus laevis (African clawed frog), this protein is Tetratricopeptide repeat protein 33 (ttc33).